Here is a 399-residue protein sequence, read N- to C-terminus: Phosphoglycerate kinase (399 aa).

Substrate-binding positions include 22–24 (DFN), Arg37, 60–63 (HFGR), Arg118, and Arg151. ATP contacts are provided by residues Lys201, Glu322, and 352–355 (GGDS).

Belongs to the phosphoglycerate kinase family. Monomer.

It is found in the cytoplasm. The enzyme catalyses (2R)-3-phosphoglycerate + ATP = (2R)-3-phospho-glyceroyl phosphate + ADP. The protein operates within carbohydrate degradation; glycolysis; pyruvate from D-glyceraldehyde 3-phosphate: step 2/5. In Wolbachia sp. subsp. Brugia malayi (strain TRS), this protein is Phosphoglycerate kinase.